A 1651-amino-acid polypeptide reads, in one-letter code: Roundabout homolog 1 (1651 aa).

The first 25 residues, M1–A25, serve as a signal peptide directing secretion. Over Q26–P897 the chain is Extracellular. The interval D33 to T57 is disordered. Residues I44–Y56 are compositionally biased toward polar residues. 5 consecutive Ig-like C2-type domains span residues P68 to E164, D170 to T257, P262 to T346, P351 to T446, and P455 to E541. A disulfide bridge links C89 with C147. A glycan (N-linked (GlcNAc...) asparagine) is linked at N160. Disulfide bonds link C191/C240, C283/C330, and C372/C428. N-linked (GlcNAc...) asparagine glycosylation is present at N463. A disulfide bond links C476 and C525. 3 Fibronectin type-III domains span residues A563–V657, A676–E773, and P778–H874. 3 N-linked (GlcNAc...) asparagine glycosylation sites follow: N790, N820, and N827. The chain crosses the membrane as a helical span at residues A898–L918. The Cytoplasmic portion of the chain corresponds to Y919 to S1651. A Phosphoserine modification is found at S940. Position 948 is a phosphothreonine (T948). The residue at position 1038 (Y1038) is a Phosphotyrosine; by ABL; in vitro. At S1055 the chain carries Phosphoserine. Phosphotyrosine; by ABL; in vitro occurs at positions 1073 and 1114. Disordered regions lie at residues K1124–Y1202, Y1224–E1337, E1352–F1397, and R1420–S1651. Over residues P1137–T1146 the composition is skewed to polar residues. Positions G1147–Q1163 are enriched in low complexity. Residues L1186–H1196 are compositionally biased toward pro residues. T1240 carries the post-translational modification Phosphothreonine. Polar residues predominate over residues Y1255–E1269. Residues E1281 to R1293 are compositionally biased toward basic and acidic residues. Over residues V1296–P1307 the composition is skewed to pro residues. At S1297 the chain carries Phosphoserine. The span at M1322 to M1336 shows a compositional bias: acidic residues. Residues S1384–F1397 are compositionally biased toward low complexity. Over residues P1438 to S1451 the composition is skewed to polar residues. Basic residues predominate over residues R1459–H1470. Residues L1480 to I1490 are compositionally biased toward pro residues. Basic and acidic residues-rich tracts occupy residues A1516–V1541 and D1549–P1573. Residues F1592–P1601 show a composition bias toward polar residues. The segment covering S1602–S1614 has biased composition (low complexity). Over residues N1642–S1651 the composition is skewed to acidic residues.

It belongs to the immunoglobulin superfamily. ROBO family. Homodimer. Dimerization is mediated by the extracellular domain and is independent of SLIT liganding. Interacts with SLIT1. Interacts with SLIT2. Interacts with FLRT3. Interacts with MYO9B (via Rho-GAP domain). In terms of processing, ubiquitinated. May be deubiquitinated by USP33. In terms of tissue distribution, widely expressed, with exception of kidney.

The protein resides in the cell membrane. It localises to the cell projection. The protein localises to the axon. Its subcellular location is the endoplasmic reticulum-Golgi intermediate compartment membrane. Functionally, receptor for SLIT1 and SLIT2 that mediates cellular responses to molecular guidance cues in cellular migration, including axonal navigation at the ventral midline of the neural tube and projection of axons to different regions during neuronal development. Interaction with the intracellular domain of FLRT3 mediates axon attraction towards cells expressing NTN1. In axon growth cones, the silencing of the attractive effect of NTN1 by SLIT2 may require the formation of a ROBO1-DCC complex. Plays a role in the regulation of cell migration via its interaction with MYO9B; inhibits MYO9B-mediated stimulation of RHOA GTPase activity, and thereby leads to increased levels of active, GTP-bound RHOA. May be required for lung development. This Homo sapiens (Human) protein is Roundabout homolog 1 (ROBO1).